Here is a 320-residue protein sequence, read N- to C-terminus: Endolytic peptidoglycan transglycosylase RlpA (320 aa).

This sequence belongs to the RlpA family.

Functionally, lytic transglycosylase with a strong preference for naked glycan strands that lack stem peptides. In Rickettsia prowazekii (strain Madrid E), this protein is Endolytic peptidoglycan transglycosylase RlpA.